Consider the following 514-residue polypeptide: ATP synthase subunit alpha (514 aa).

170 to 177 contributes to the ATP binding site; it reads GDRQTGKT.

It belongs to the ATPase alpha/beta chains family. As to quaternary structure, F-type ATPases have 2 components, CF(1) - the catalytic core - and CF(0) - the membrane proton channel. CF(1) has five subunits: alpha(3), beta(3), gamma(1), delta(1), epsilon(1). CF(0) has three main subunits: a(1), b(2) and c(9-12). The alpha and beta chains form an alternating ring which encloses part of the gamma chain. CF(1) is attached to CF(0) by a central stalk formed by the gamma and epsilon chains, while a peripheral stalk is formed by the delta and b chains.

Its subcellular location is the cell inner membrane. It catalyses the reaction ATP + H2O + 4 H(+)(in) = ADP + phosphate + 5 H(+)(out). Its function is as follows. Produces ATP from ADP in the presence of a proton gradient across the membrane. The alpha chain is a regulatory subunit. The polypeptide is ATP synthase subunit alpha (Psychrobacter sp. (strain PRwf-1)).